A 76-amino-acid chain; its full sequence is Beta-defensin 121 (76 aa).

A signal peptide spans 1–15 (MKLLLLLLTVTLLLA). Disulfide bonds link cysteine 23-cysteine 50, cysteine 30-cysteine 44, and cysteine 34-cysteine 51.

Belongs to the beta-defensin family.

The protein resides in the secreted. Has antibacterial activity. This chain is Beta-defensin 121 (DEFB121), found in Pan troglodytes (Chimpanzee).